The sequence spans 1485 residues: Chromosome partition protein MukB (1485 aa).

34–41 (GGNGAGKS) is a binding site for ATP. Coiled-coil stretches lie at residues 337 to 480 (LNLV…QAYQ) and 509 to 605 (QHLA…PVWL). The tract at residues 666–783 (PSGAEDARLI…EVPLFGRAAR (118 aa)) is flexible hinge. Coiled-coil stretches lie at residues 835-915 (EAEI…IQQH) and 977-1116 (GMLT…AKAG).

This sequence belongs to the SMC family. MukB subfamily. As to quaternary structure, homodimerization via its hinge domain. Binds to DNA via its C-terminal region. Interacts, and probably forms a ternary complex, with MukE and MukF via its C-terminal region. The complex formation is stimulated by calcium or magnesium. Interacts with tubulin-related protein FtsZ.

It is found in the cytoplasm. Its subcellular location is the nucleoid. Plays a central role in chromosome condensation, segregation and cell cycle progression. Functions as a homodimer, which is essential for chromosome partition. Involved in negative DNA supercoiling in vivo, and by this means organize and compact chromosomes. May achieve or facilitate chromosome segregation by condensation DNA from both sides of a centrally located replisome during cell division. This is Chromosome partition protein MukB from Yersinia pseudotuberculosis serotype O:3 (strain YPIII).